The chain runs to 380 residues: Probable cytosolic iron-sulfur protein assembly protein 1 (380 aa).

WD repeat units lie at residues 10-49 (AHNDKAWSVSVHPTLPIIATASTDKSTKLYKLSTKQKFPL), 56-108 (THKR…VEYD), 135-175 (GHEN…EEFE), 182-221 (DHSQDVKNVSWHPSMNILASSSYDDTIRIYQQDIAGDEWS), 228-275 (GHEG…EEDK), 299-338 (VHKYPVYSVAWSSLTGKIASAGSDGKIVVYSEAEKGKWVI), and 346-380 (HGVHEINCVIWAQLDDENEILVSAGDDGYVNLWNV).

This sequence belongs to the WD repeat CIA1 family. In terms of assembly, interacts with NAR1.

The protein resides in the cytoplasm. The protein localises to the nucleus. Functionally, essential component of the cytosolic iron-sulfur (Fe/S) protein assembly machinery. Required for the maturation of extramitochondrial Fe/S proteins. The sequence is that of Probable cytosolic iron-sulfur protein assembly protein 1 from Candida dubliniensis (strain CD36 / ATCC MYA-646 / CBS 7987 / NCPF 3949 / NRRL Y-17841) (Yeast).